We begin with the raw amino-acid sequence, 240 residues long: DNA repair protein RecO (240 aa).

The protein belongs to the RecO family.

Functionally, involved in DNA repair and RecF pathway recombination. This chain is DNA repair protein RecO, found in Actinobacillus pleuropneumoniae serotype 3 (strain JL03).